We begin with the raw amino-acid sequence, 1325 residues long: uncharacterized protein (1325 aa).

Positions 1–18 (MNRIYRVIWNCTLQVFQA) are cleaved as a signal peptide. Cys-19 carries N-palmitoyl cysteine lipidation. Residue Cys-19 is the site of S-diacylglycerol cysteine attachment.

It to E.coli YfaL.

It is found in the cell membrane. This is an uncharacterized protein from Escherichia coli (strain K12).